Here is a 1024-residue protein sequence, read N- to C-terminus: Protein translocase subunit SecA (1024 aa).

ATP-binding positions include Q143, 161-165 (GEGKT), and D661. The segment at 970 to 1024 (HKAAESVYTASSDEPETNQEESPQQPAIAEKKPGRNDLCPCGSGKKYKNCHGQQP) is disordered. 4 residues coordinate Zn(2+): C1008, C1010, C1019, and H1020.

This sequence belongs to the SecA family. Monomer and homodimer. Part of the essential Sec protein translocation apparatus which comprises SecA, SecYEG and auxiliary proteins SecDF. Other proteins may also be involved. It depends on Zn(2+) as a cofactor.

Its subcellular location is the cell inner membrane. The protein localises to the cytoplasm. It catalyses the reaction ATP + H2O + cellular proteinSide 1 = ADP + phosphate + cellular proteinSide 2.. In terms of biological role, part of the Sec protein translocase complex. Interacts with the SecYEG preprotein conducting channel. Has a central role in coupling the hydrolysis of ATP to the transfer of proteins into and across the cell membrane, serving as an ATP-driven molecular motor driving the stepwise translocation of polypeptide chains across the membrane. This Pelodictyon phaeoclathratiforme (strain DSM 5477 / BU-1) protein is Protein translocase subunit SecA.